We begin with the raw amino-acid sequence, 331 residues long: Nucleotide sugar transporter SLC35B4 (331 aa).

The next 11 membrane-spanning stretches (helical) occupy residues 4-24 (AFAVGLVFAGCCSNVIFLELL), 30-50 (GCGNIVTFAQFLFIAVEGFLF), 59-79 (PAIPIRYYAIMVTMFFTVSVV), 92-112 (LHMIFRSGSLIANMILGIIIL), 124-144 (IALVSAGIFICTFMSAKQVTV), 153-173 (GFQAFAWWLLGIAALTFALLM), 201-221 (ALPLPGFIFLASDIYDHVVLF), 229-249 (VPVIGVTMPVMWFYLLMNVVT), 251-267 (YVCIRGVFILTTECTSL), 268-288 (TVTLVVTLRKFVSLIFSILYF), and 294-314 (MWHWLGTSFVFIGTLMYTEVW). A Mediates endoplasmic reticulum retention motif is present at residues 326 to 331 (KDDKKD).

The protein belongs to the nucleotide-sugar transporter family. SLC35B subfamily.

The protein resides in the endoplasmic reticulum membrane. It catalyses the reaction UDP-N-acetyl-alpha-D-glucosamine(in) + UDP-alpha-D-glucuronate(out) = UDP-N-acetyl-alpha-D-glucosamine(out) + UDP-alpha-D-glucuronate(in). The catalysed reaction is UDP-alpha-D-xylose(in) + UDP-alpha-D-glucuronate(out) = UDP-alpha-D-xylose(out) + UDP-alpha-D-glucuronate(in). In terms of biological role, antiporter that transports nucleotide sugars across the endoplasmic reticulum (ER) membrane in exchange for another nucleotide sugar. May couple UDP-alpha-D-glucuronate (UDP-GlcA) or UDP-alpha-D-xylose (UDP-Xyl) efflux to UDP-alpha-D-glucuronate (UDP-GlcA) influx into the ER lumen, which in turn stimulates glucuronidation and excretion of endobiotics and xenobiotics. The polypeptide is Nucleotide sugar transporter SLC35B4 (Slc35b4) (Mus musculus (Mouse)).